A 118-amino-acid chain; its full sequence is Large ribosomal subunit protein bL19 (118 aa).

It belongs to the bacterial ribosomal protein bL19 family.

Functionally, this protein is located at the 30S-50S ribosomal subunit interface and may play a role in the structure and function of the aminoacyl-tRNA binding site. In Dictyoglomus thermophilum (strain ATCC 35947 / DSM 3960 / H-6-12), this protein is Large ribosomal subunit protein bL19.